The sequence spans 431 residues: Enolase (431 aa).

Q167 is a (2R)-2-phosphoglycerate binding site. The Proton donor role is filled by E209. Residues D246, E289, and D316 each contribute to the Mg(2+) site. Positions 341, 370, 371, and 392 each coordinate (2R)-2-phosphoglycerate. The active-site Proton acceptor is the K341.

The protein belongs to the enolase family. As to quaternary structure, component of the RNA degradosome, a multiprotein complex involved in RNA processing and mRNA degradation. It depends on Mg(2+) as a cofactor.

The protein resides in the cytoplasm. It is found in the secreted. Its subcellular location is the cell surface. It carries out the reaction (2R)-2-phosphoglycerate = phosphoenolpyruvate + H2O. The protein operates within carbohydrate degradation; glycolysis; pyruvate from D-glyceraldehyde 3-phosphate: step 4/5. In terms of biological role, catalyzes the reversible conversion of 2-phosphoglycerate (2-PG) into phosphoenolpyruvate (PEP). It is essential for the degradation of carbohydrates via glycolysis. The sequence is that of Enolase from Shewanella oneidensis (strain ATCC 700550 / JCM 31522 / CIP 106686 / LMG 19005 / NCIMB 14063 / MR-1).